Here is a 258-residue protein sequence, read N- to C-terminus: UPF0246 protein IL2146 (258 aa).

It belongs to the UPF0246 family.

The chain is UPF0246 protein IL2146 from Idiomarina loihiensis (strain ATCC BAA-735 / DSM 15497 / L2-TR).